The following is a 464-amino-acid chain: Cysteine--tRNA ligase (464 aa).

Zn(2+) is bound at residue C27. The 'HIGH' region motif lies at 29-39 (PTVYNYFHIGN). Zn(2+) is bound by residues C207, H232, and E236. A 'KMSKS' region motif is present at residues 264 to 268 (KMSKS). Residue K267 coordinates ATP.

It belongs to the class-I aminoacyl-tRNA synthetase family. As to quaternary structure, monomer. Zn(2+) serves as cofactor.

It localises to the cytoplasm. The catalysed reaction is tRNA(Cys) + L-cysteine + ATP = L-cysteinyl-tRNA(Cys) + AMP + diphosphate. The polypeptide is Cysteine--tRNA ligase (Alkaliphilus oremlandii (strain OhILAs) (Clostridium oremlandii (strain OhILAs))).